The chain runs to 232 residues: Platelet-activating factor acetylhydrolase IB subunit alpha1 (232 aa).

Residues 1 to 20 (MSGEGENPASKPTPVQDVQG) form a disordered region. N-acetylserine is present on Ser-2. Ser-2 is subject to Phosphoserine. Active-site residues include Ser-48, Asp-193, and His-196.

It belongs to the 'GDSL' lipolytic enzyme family. Platelet-activating factor acetylhydrolase IB beta/gamma subunits subfamily. Forms a catalytic dimer which is either homodimer (alpha1/alpha1 homodimer) or heterodimer with PAFAH1B2 (alpha1/alpha2 heterodimer). Component of the cytosolic (PAF-AH (I)) heterotetrameric enzyme, which is composed of PAFAH1B1 (beta), PAFAH1B2 (alpha2) and PAFAH1B3 (alpha1) subunits. The catalytic activity of the enzyme resides in the alpha1 (PAFAH1B3) and alpha2 (PAFAH1B2) subunits, whereas the beta subunit (PAFAH1B1) has regulatory activity. Trimer formation is not essential for the catalytic activity. Interacts with VLDLR; this interaction may modulate the Reelin pathway.

Its subcellular location is the cytoplasm. The catalysed reaction is a 1-O-alkyl-2-acetyl-sn-glycero-3-phosphocholine + H2O = a 1-O-alkyl-sn-glycero-3-phosphocholine + acetate + H(+). It carries out the reaction 1-O-hexadecyl-2-acetyl-sn-glycero-3-phosphocholine + H2O = 1-O-hexadecyl-sn-glycero-3-phosphocholine + acetate + H(+). The enzyme catalyses 1-O-hexadecyl-2-acetyl-sn-glycero-3-phosphate + H2O = 1-O-hexadecyl-sn-glycero-3-phosphate + acetate + H(+). With respect to regulation, beta subunit (PAFAH1B1) inhibits the acetylhydrolase activity of the alpha1/alpha1 catalytic homodimer. Its function is as follows. Alpha1 catalytic subunit of the cytosolic type I platelet-activating factor (PAF) acetylhydrolase (PAF-AH (I)) heterotetrameric enzyme that catalyzes the hydrolyze of the acetyl group at the sn-2 position of PAF and its analogs and modulates the action of PAF. The activity and substrate specificity of PAF-AH (I) are affected by its subunit composition. Both alpha1/alpha1 homodimer (PAFAH1B3/PAFAH1B3 homodimer) and alpha1/alpha2 heterodimer(PAFAH1B3/PAFAH1B2 heterodimer) hydrolyze 1-O-alkyl-2-acetyl-sn-glycero-3-phosphoric acid (AAGPA) more efficiently than PAF, but they have little hydrolytic activity towards 1-O-alkyl-2-acetyl-sn-glycero-3-phosphorylethanolamine (AAGPE). Plays an important role during the development of brain. The chain is Platelet-activating factor acetylhydrolase IB subunit alpha1 from Mus musculus (Mouse).